The chain runs to 408 residues: Succinylornithine transaminase (408 aa).

At lysine 252 the chain carries N6-(pyridoxal phosphate)lysine.

The protein belongs to the class-III pyridoxal-phosphate-dependent aminotransferase family. AstC subfamily. Requires pyridoxal 5'-phosphate as cofactor.

It carries out the reaction N(2)-succinyl-L-ornithine + 2-oxoglutarate = N-succinyl-L-glutamate 5-semialdehyde + L-glutamate. It functions in the pathway amino-acid degradation; L-arginine degradation via AST pathway; L-glutamate and succinate from L-arginine: step 3/5. Catalyzes the transamination of N(2)-succinylornithine and alpha-ketoglutarate into N(2)-succinylglutamate semialdehyde and glutamate. Can also act as an acetylornithine aminotransferase. This chain is Succinylornithine transaminase, found in Salmonella typhimurium (strain LT2 / SGSC1412 / ATCC 700720).